The chain runs to 152 residues: MTSTVTTTVGCGGLPVRPLSTATRGRPRRCAVRAQAAGADASNDKSVEVMRKFSEQYARRSNTFFCADKTVTAVVIKGLADHRDTLGAPLCPCRHYDDKAAEVAQGFWNCPCVPMRERKECHCMLFLTPDNDFAGKDQVISFEEIKEATSKF.

Residues 1-38 (MTSTVTTTVGCGGLPVRPLSTATRGRPRRCAVRAQAAG) constitute a chloroplast transit peptide. Residue cysteine 91 participates in [4Fe-4S] cluster binding. Residue cysteine 93 is the Nucleophile of the active site. The cysteines at positions 93 and 123 are disulfide-linked. [4Fe-4S] cluster-binding residues include cysteine 110, cysteine 112, and cysteine 121.

It belongs to the ferredoxin thioredoxin reductase beta subunit family. In terms of assembly, heterodimer of subunit A (variable subunit) and subunit B (catalytic subunit). Heterodimeric FTR forms a complex with ferredoxin and thioredoxin. Requires [4Fe-4S] cluster as cofactor.

It is found in the plastid. It localises to the chloroplast. It carries out the reaction [thioredoxin]-disulfide + 2 reduced [2Fe-2S]-[ferredoxin] + 2 H(+) = [thioredoxin]-dithiol + 2 oxidized [2Fe-2S]-[ferredoxin]. Its function is as follows. Catalytic subunit of the ferredoxin-thioredoxin reductase (FTR), which catalyzes the two-electron reduction of thioredoxins by the electrons provided by reduced ferredoxin. The sequence is that of Ferredoxin-thioredoxin reductase catalytic chain, chloroplastic (FTRC) from Zea mays (Maize).